The following is a 372-amino-acid chain: Putative 26S proteasome regulatory subunit homolog MTBMA_c13930 (372 aa).

164 to 171 (GSPGTGKT) contributes to the ATP binding site.

It belongs to the AAA ATPase family.

The 26S proteasome is involved in the ATP-dependent degradation of ubiquitinated proteins. The regulatory (or ATPase) complex confers ATP dependency and substrate specificity to the 26S complex. This Methanothermobacter marburgensis (strain ATCC BAA-927 / DSM 2133 / JCM 14651 / NBRC 100331 / OCM 82 / Marburg) (Methanobacterium thermoautotrophicum) protein is Putative 26S proteasome regulatory subunit homolog MTBMA_c13930.